Here is a 427-residue protein sequence, read N- to C-terminus: Trigger factor (427 aa).

A PPIase FKBP-type domain is found at 163–248; it reads GDTVVIDFVG…VNEVKAKEVP (86 aa).

The protein belongs to the FKBP-type PPIase family. Tig subfamily.

The protein localises to the cytoplasm. The catalysed reaction is [protein]-peptidylproline (omega=180) = [protein]-peptidylproline (omega=0). In terms of biological role, involved in protein export. Acts as a chaperone by maintaining the newly synthesized protein in an open conformation. Functions as a peptidyl-prolyl cis-trans isomerase. The sequence is that of Trigger factor from Streptococcus thermophilus (strain CNRZ 1066).